Reading from the N-terminus, the 95-residue chain is Small ribosomal subunit protein bS6 (95 aa).

This sequence belongs to the bacterial ribosomal protein bS6 family.

Its function is as follows. Binds together with bS18 to 16S ribosomal RNA. The polypeptide is Small ribosomal subunit protein bS6 (Symbiobacterium thermophilum (strain DSM 24528 / JCM 14929 / IAM 14863 / T)).